Here is a 125-residue protein sequence, read N- to C-terminus: Cu-Zn superoxide dismutase-like protein OPG175 (125 aa).

A disulfide bond links C52 and C102.

The protein belongs to the Cu-Zn superoxide dismutase family.

It localises to the virion. It is found in the host cytoplasm. Superoxide dismutase-like protein with no enzymatic activity. The chain is Cu-Zn superoxide dismutase-like protein OPG175 (OPG175) from Homo sapiens (Human).